Consider the following 302-residue polypeptide: Glycine--tRNA ligase alpha subunit (302 aa).

Belongs to the class-II aminoacyl-tRNA synthetase family. As to quaternary structure, tetramer of two alpha and two beta subunits.

The protein localises to the cytoplasm. The enzyme catalyses tRNA(Gly) + glycine + ATP = glycyl-tRNA(Gly) + AMP + diphosphate. The protein is Glycine--tRNA ligase alpha subunit of Wigglesworthia glossinidia brevipalpis.